Reading from the N-terminus, the 199-residue chain is Protein GrpE (199 aa).

Residues 1–50 (MAKKSTRTTPEDSQASTTDSAATSTASEATQAATSATDDQAEQTTAVDPT) form a disordered region. Residues 11–46 (EDSQASTTDSAATSTASEATQAATSATDDQAEQTTA) are compositionally biased toward low complexity.

It belongs to the GrpE family. Homodimer.

Its subcellular location is the cytoplasm. Participates actively in the response to hyperosmotic and heat shock by preventing the aggregation of stress-denatured proteins, in association with DnaK and GrpE. It is the nucleotide exchange factor for DnaK and may function as a thermosensor. Unfolded proteins bind initially to DnaJ; upon interaction with the DnaJ-bound protein, DnaK hydrolyzes its bound ATP, resulting in the formation of a stable complex. GrpE releases ADP from DnaK; ATP binding to DnaK triggers the release of the substrate protein, thus completing the reaction cycle. Several rounds of ATP-dependent interactions between DnaJ, DnaK and GrpE are required for fully efficient folding. This Lactiplantibacillus plantarum (strain ATCC BAA-793 / NCIMB 8826 / WCFS1) (Lactobacillus plantarum) protein is Protein GrpE.